The primary structure comprises 259 residues: 2,3-dihydroxy-2,3-dihydro-p-cumate dehydrogenase (259 aa).

An NAD(+)-binding site is contributed by 18-42 (VTGGAHGIGLGIVERLLGLGARVTA). The Proton acceptor role is filled by Tyr163.

The protein belongs to the short-chain dehydrogenases/reductases (SDR) family.

It catalyses the reaction (2R,3S)-2,3-dihydroxy-2,3-dihydro-p-cumate + NAD(+) = 2,3-dihydroxy-p-cumate + NADH + H(+). The protein operates within aromatic compound metabolism; p-cumate degradation; acetaldehyde and pyruvate from p-cumate: step 2/7. The polypeptide is 2,3-dihydroxy-2,3-dihydro-p-cumate dehydrogenase (cmtB) (Pseudomonas putida (strain ATCC 700007 / DSM 6899 / JCM 31910 / BCRC 17059 / LMG 24140 / F1)).